Reading from the N-terminus, the 408-residue chain is MTQSQTDLRNGPDATGMFGAFGGRYVAETLMPLILDLAREYEAAKEDPAFKEELAYFQRDYVGRPSPLYFAERLTEFCGGAKIYLKREELNHTGAHKINNCIGQILLARRMGKKRIIAETGAGMHGVATATVAARFGLQCVIYMGTTDIERQQANVFRMKLLGAEVIPVVAGTGTLKDAMNEALRDWVTNVEDTFYLIGTVAGPHPYPAMVRDFQAVIGKETRDQLQAQEGRLPDSLVACIGGGSNAMGLFHPFLDDKSVEIIGVEAAGHGIETGKHAASLNGGVPGVLHGNRTFLLQDDDGQIIDAHSISAGLDYPGIGPEHAWLHDIGRVQYTSVTDDEALDAFHKCCRLEGIIPALESAHALAEVFKRAPTLPKDHLMVVNLSGRGDKDMQTVMHHMETTKQEKH.

Lys-97 bears the N6-(pyridoxal phosphate)lysine mark.

Belongs to the TrpB family. As to quaternary structure, tetramer of two alpha and two beta chains. The cofactor is pyridoxal 5'-phosphate.

It catalyses the reaction (1S,2R)-1-C-(indol-3-yl)glycerol 3-phosphate + L-serine = D-glyceraldehyde 3-phosphate + L-tryptophan + H2O. It functions in the pathway amino-acid biosynthesis; L-tryptophan biosynthesis; L-tryptophan from chorismate: step 5/5. Functionally, the beta subunit is responsible for the synthesis of L-tryptophan from indole and L-serine. This chain is Tryptophan synthase beta chain (trpB), found in Pseudomonas syringae pv. syringae.